The sequence spans 119 residues: Large ribosomal subunit protein uL18 (119 aa).

This sequence belongs to the universal ribosomal protein uL18 family. Part of the 50S ribosomal subunit; part of the 5S rRNA/L5/L18/L25 subcomplex. Contacts the 5S and 23S rRNAs.

Functionally, this is one of the proteins that bind and probably mediate the attachment of the 5S RNA into the large ribosomal subunit, where it forms part of the central protuberance. This chain is Large ribosomal subunit protein uL18, found in Desulfovibrio desulfuricans (strain ATCC 27774 / DSM 6949 / MB).